Here is a 372-residue protein sequence, read N- to C-terminus: 4-hydroxy-3-methylbut-2-en-1-yl diphosphate synthase (flavodoxin) (372 aa).

Cys270, Cys273, Cys305, and Glu312 together coordinate [4Fe-4S] cluster.

Belongs to the IspG family. The cofactor is [4Fe-4S] cluster.

It catalyses the reaction (2E)-4-hydroxy-3-methylbut-2-enyl diphosphate + oxidized [flavodoxin] + H2O + 2 H(+) = 2-C-methyl-D-erythritol 2,4-cyclic diphosphate + reduced [flavodoxin]. Its pathway is isoprenoid biosynthesis; isopentenyl diphosphate biosynthesis via DXP pathway; isopentenyl diphosphate from 1-deoxy-D-xylulose 5-phosphate: step 5/6. Converts 2C-methyl-D-erythritol 2,4-cyclodiphosphate (ME-2,4cPP) into 1-hydroxy-2-methyl-2-(E)-butenyl 4-diphosphate. This Escherichia coli O8 (strain IAI1) protein is 4-hydroxy-3-methylbut-2-en-1-yl diphosphate synthase (flavodoxin).